A 310-amino-acid polypeptide reads, in one-letter code: Hairy/enhancer-of-split related with YRPW motif-like protein (310 aa).

The interval 1-21 (MKRPHDYSSPDSDTDELIDVG) is disordered. Over residues 12-21 (SDTDELIDVG) the composition is skewed to acidic residues. Positions 43–98 (ARKKRRGIIEKRRRDRINHSLSELRRLVPSAFEKQGSSKLEKAEILQMTVDHLKLL) constitute a bHLH domain. Positions 116-152 (YRTLGFRECVGEVVRYLSSLEGVESSDPIGARLVSHL) constitute an Orange domain. 2 stretches are compositionally biased toward low complexity: residues 182-192 (LQAASPPASST) and 261-273 (PSSS…SSPP). 2 disordered regions span residues 182 to 208 (LQAA…HGTA) and 248 to 310 (HRLQ…IGAF). Polar residues predominate over residues 293–302 (LSSSSKSAQA).

Belongs to the HEY family.

Its subcellular location is the nucleus. In terms of biological role, transcriptional repressor which functions as a downstream effector of Notch signaling. This chain is Hairy/enhancer-of-split related with YRPW motif-like protein (heyl), found in Danio rerio (Zebrafish).